Here is a 181-residue protein sequence, read N- to C-terminus: Protein GrpE (181 aa).

A compositionally biased stretch (polar residues) spans 1-13; it reads MENTQENPATQSA. Positions 1-34 are disordered; it reads MENTQENPATQSAEDIGSAKQAAQGAAPAAEAAD. Residues 19-34 are compositionally biased toward low complexity; the sequence is AKQAAQGAAPAAEAAD.

This sequence belongs to the GrpE family. Homodimer.

The protein localises to the cytoplasm. Functionally, participates actively in the response to hyperosmotic and heat shock by preventing the aggregation of stress-denatured proteins, in association with DnaK and GrpE. It is the nucleotide exchange factor for DnaK and may function as a thermosensor. Unfolded proteins bind initially to DnaJ; upon interaction with the DnaJ-bound protein, DnaK hydrolyzes its bound ATP, resulting in the formation of a stable complex. GrpE releases ADP from DnaK; ATP binding to DnaK triggers the release of the substrate protein, thus completing the reaction cycle. Several rounds of ATP-dependent interactions between DnaJ, DnaK and GrpE are required for fully efficient folding. This is Protein GrpE from Burkholderia vietnamiensis (strain G4 / LMG 22486) (Burkholderia cepacia (strain R1808)).